We begin with the raw amino-acid sequence, 164 residues long: uncharacterized protein (164 aa).

Ser117 carries the phosphoserine modification.

This is an uncharacterized protein from Bacillus subtilis (strain 168).